The following is a 378-amino-acid chain: Alanine dehydrogenase (378 aa).

R15 and K74 together coordinate substrate. H95 acts as the Proton donor/acceptor in catalysis. NAD(+)-binding positions include S132, 176 to 177, D196, S218, 237 to 238, 265 to 268, and 297 to 300; these read VV, VL, VAID, and VANM. Residue D268 is the Proton donor/acceptor of the active site.

This sequence belongs to the AlaDH/PNT family. As to quaternary structure, homohexamer. Trimer of dimer.

Its subcellular location is the cytoplasm. It catalyses the reaction L-alanine + NAD(+) + H2O = pyruvate + NH4(+) + NADH + H(+). It functions in the pathway amino-acid degradation; L-alanine degradation via dehydrogenase pathway; NH(3) and pyruvate from L-alanine: step 1/1. Its function is as follows. Catalyzes the reversible oxidative deamination of L-alanine to pyruvate. Oxidative deamination proceeds through a sequential, ordered ternary-binary mechanism, where NAD(+) binds first followed by L-alanine; the products are released in the order ammonia, pyruvate and NADH. Disruption blocks sporulation probably in stage V; 20-30% sporulation can be restored if the media is supplemented with pyruvate, suggesting lack of pyruvate blocks sporulation. Thus it is a key factor in the assimilation of L-alanine as an energy source via the tricarboxylic acid cycle during sporulation. In Bacillus subtilis (strain 168), this protein is Alanine dehydrogenase.